A 394-amino-acid polypeptide reads, in one-letter code: S-adenosylmethionine synthase (394 aa).

Residue His15 coordinates ATP. Asp17 contributes to the Mg(2+) binding site. Residue Glu43 participates in K(+) binding. 2 residues coordinate L-methionine: Glu56 and Gln99. Positions 99–109 are flexible loop; sequence QSPDIALGVNK. ATP-binding positions include 173 to 175, 239 to 240, Asp248, 254 to 255, Ala271, and Lys275; these read DGK, RF, and RK. Asp248 lines the L-methionine pocket. Lys279 contributes to the L-methionine binding site.

Belongs to the AdoMet synthase family. As to quaternary structure, homotetramer; dimer of dimers. Mg(2+) is required as a cofactor. The cofactor is K(+).

Its subcellular location is the cytoplasm. It carries out the reaction L-methionine + ATP + H2O = S-adenosyl-L-methionine + phosphate + diphosphate. Its pathway is amino-acid biosynthesis; S-adenosyl-L-methionine biosynthesis; S-adenosyl-L-methionine from L-methionine: step 1/1. Catalyzes the formation of S-adenosylmethionine (AdoMet) from methionine and ATP. The overall synthetic reaction is composed of two sequential steps, AdoMet formation and the subsequent tripolyphosphate hydrolysis which occurs prior to release of AdoMet from the enzyme. The protein is S-adenosylmethionine synthase of Kosmotoga olearia (strain ATCC BAA-1733 / DSM 21960 / TBF 19.5.1).